Here is a 448-residue protein sequence, read N- to C-terminus: Cysteine--tRNA ligase (448 aa).

Cys-27 provides a ligand contact to Zn(2+). A 'HIGH' region motif is present at residues 29 to 39 (PTVYNYIHVGN). Residues Cys-210, His-235, and Glu-239 each coordinate Zn(2+). Residues 267-271 (KMSKS) carry the 'KMSKS' region motif. Residue Lys-270 participates in ATP binding.

Belongs to the class-I aminoacyl-tRNA synthetase family. In terms of assembly, monomer. The cofactor is Zn(2+).

It localises to the cytoplasm. The catalysed reaction is tRNA(Cys) + L-cysteine + ATP = L-cysteinyl-tRNA(Cys) + AMP + diphosphate. The polypeptide is Cysteine--tRNA ligase (Lactococcus lactis subsp. cremoris (strain MG1363)).